A 486-amino-acid chain; its full sequence is tRNA-2-methylthio-N(6)-dimethylallyladenosine synthase (486 aa).

An MTTase N-terminal domain is found at 35–151 (RNLYVESYGC…LPRLLATVDS (117 aa)). Cys-44, Cys-80, Cys-114, Cys-189, Cys-193, and Cys-196 together coordinate [4Fe-4S] cluster. The Radical SAM core domain maps to 175-419 (NSNGVSAFIS…IDKQRQHSFE (245 aa)). Residues 422–485 (LKDIGKVYQV…TGTLLGEICT (64 aa)) enclose the TRAM domain.

The protein belongs to the methylthiotransferase family. MiaB subfamily. Monomer. The cofactor is [4Fe-4S] cluster.

Its subcellular location is the cytoplasm. It catalyses the reaction N(6)-dimethylallyladenosine(37) in tRNA + (sulfur carrier)-SH + AH2 + 2 S-adenosyl-L-methionine = 2-methylsulfanyl-N(6)-dimethylallyladenosine(37) in tRNA + (sulfur carrier)-H + 5'-deoxyadenosine + L-methionine + A + S-adenosyl-L-homocysteine + 2 H(+). Catalyzes the methylthiolation of N6-(dimethylallyl)adenosine (i(6)A), leading to the formation of 2-methylthio-N6-(dimethylallyl)adenosine (ms(2)i(6)A) at position 37 in tRNAs that read codons beginning with uridine. The protein is tRNA-2-methylthio-N(6)-dimethylallyladenosine synthase of Amoebophilus asiaticus (strain 5a2).